The primary structure comprises 121 residues: MEKERIELRLDYVLNSGKKTGKSYESILKLIAETFGVQLTTTIHNRNISYYLIAITSPAKLAILINYLNEYSLFTSKYLNFQDFSNCVNMMLNKEHLTISGREKITILKESMNNKRTYGII.

It belongs to the LAGLIDADG endonuclease family.

It is found in the mitochondrion. Mitochondrial DNA endonuclease involved in intron homing. The polypeptide is Probable intron-encoded DNA endonuclease aI1 (aI1) (Mycosarcoma maydis (Corn smut fungus)).